We begin with the raw amino-acid sequence, 410 residues long: MPHSTNREMILGIVVGTAGISLLLLWYHKVRKPRTAMSLPKFLSLGNSLDLMTLQDEMPSGQGTTAIFQGRQLQILEKLNELLTHMEELKEEIRVLKEAIPKLEEYIQGELGGKVTVHKISPQHRARKRRLATVQSSATSNSSEEAESEGGYVTANTDTEEQSFPVPKEFNTHVEELNLDALIQRADNLRVNESRKVESFELLCDHKEKFRDEIEFIWRFARAYGDMYELSTNIQEKKHYANIGKTLGEKAIMRAPKNGYCHLWYAVLCGYVSEFEGLQNKINYGYRFKEHLDKAIEFLPEEPFLYYLKGRYCYAVSKLSWIERKMAATLFGNIPSSTVQEALQNFLKVEELQPGFSKSNYMFMAKCYADLNQIDSAMKFCNLAVLLPCITKEDKDAQKEVKKISTSLKR.

Residues 10-27 traverse the membrane as a helical segment; it reads ILGIVVGTAGISLLLLWY. Residues 71–109 are a coiled coil; sequence RQLQILEKLNELLTHMEELKEEIRVLKEAIPKLEEYIQG. S121 bears the Phosphoserine mark. A compositionally biased stretch (basic residues) spans 122–131; the sequence is PQHRARKRRL. The disordered stretch occupies residues 122-153; sequence PQHRARKRRLATVQSSATSNSSEEAESEGGYV. A Phosphothreonine modification is found at T139. Y152 carries the post-translational modification Phosphotyrosine. 2 positions are modified to phosphothreonine: T154 and T157.

This sequence belongs to the RMDN family. Interacts with microtubules.

The protein localises to the membrane. Its subcellular location is the cytoplasm. It localises to the cytoskeleton. The protein resides in the spindle. It is found in the spindle pole. This Bos taurus (Bovine) protein is Regulator of microtubule dynamics protein 2 (RMDN2).